Consider the following 446-residue polypeptide: Chromosomal replication initiator protein DnaA (446 aa).

Residues 1–81 (MENISDLWNS…AKLAIRFIIP (81 aa)) form a domain I, interacts with DnaA modulators region. Positions 81-109 (PQSQAEEDIDLPPVKPNPAQDDSAHLPQS) are domain II. Residues 110–326 (MLNPKYTFDT…GALIRVVAYS (217 aa)) are domain III, AAA+ region. ATP is bound by residues glycine 154, glycine 156, lysine 157, and threonine 158. Residues 327–446 (SLINKDINAD…QVEEINGILK (120 aa)) form a domain IV, binds dsDNA region.

Belongs to the DnaA family. Oligomerizes as a right-handed, spiral filament on DNA at oriC.

Its subcellular location is the cytoplasm. Its function is as follows. Plays an essential role in the initiation and regulation of chromosomal replication. ATP-DnaA binds to the origin of replication (oriC) to initiate formation of the DNA replication initiation complex once per cell cycle. Binds the DnaA box (a 9 base pair repeat at the origin) and separates the double-stranded (ds)DNA. Forms a right-handed helical filament on oriC DNA; dsDNA binds to the exterior of the filament while single-stranded (ss)DNA is stabiized in the filament's interior. The ATP-DnaA-oriC complex binds and stabilizes one strand of the AT-rich DNA unwinding element (DUE), permitting loading of DNA polymerase. After initiation quickly degrades to an ADP-DnaA complex that is not apt for DNA replication. Binds acidic phospholipids. The sequence is that of Chromosomal replication initiator protein DnaA from Bacillus cereus (strain B4264).